Consider the following 402-residue polypeptide: S-adenosylmethionine synthase (402 aa).

An ATP-binding site is contributed by histidine 16. Aspartate 18 contacts Mg(2+). A K(+)-binding site is contributed by glutamate 44. L-methionine-binding residues include glutamate 57 and glutamine 103. A flexible loop region spans residues 103–113 (QSPDIAQGVDT). Residues 178–180 (DGK), 249–250 (KF), aspartate 258, 264–265 (RK), alanine 281, and lysine 285 contribute to the ATP site. Residue aspartate 258 coordinates L-methionine. Lysine 289 contacts L-methionine.

The protein belongs to the AdoMet synthase family. In terms of assembly, homotetramer; dimer of dimers. The cofactor is Mg(2+). Requires K(+) as cofactor.

It is found in the cytoplasm. It carries out the reaction L-methionine + ATP + H2O = S-adenosyl-L-methionine + phosphate + diphosphate. The protein operates within amino-acid biosynthesis; S-adenosyl-L-methionine biosynthesis; S-adenosyl-L-methionine from L-methionine: step 1/1. Functionally, catalyzes the formation of S-adenosylmethionine (AdoMet) from methionine and ATP. The overall synthetic reaction is composed of two sequential steps, AdoMet formation and the subsequent tripolyphosphate hydrolysis which occurs prior to release of AdoMet from the enzyme. The sequence is that of S-adenosylmethionine synthase from Mycolicibacterium vanbaalenii (strain DSM 7251 / JCM 13017 / BCRC 16820 / KCTC 9966 / NRRL B-24157 / PYR-1) (Mycobacterium vanbaalenii).